A 147-amino-acid polypeptide reads, in one-letter code: Cyanate hydratase (147 aa).

Residues Arg-88, Glu-91, and Ser-114 contribute to the active site.

This sequence belongs to the cyanase family.

The catalysed reaction is cyanate + hydrogencarbonate + 3 H(+) = NH4(+) + 2 CO2. Functionally, catalyzes the reaction of cyanate with bicarbonate to produce ammonia and carbon dioxide. This is Cyanate hydratase from Albidiferax ferrireducens (strain ATCC BAA-621 / DSM 15236 / T118) (Rhodoferax ferrireducens).